Here is a 127-residue protein sequence, read N- to C-terminus: Aspartate 1-decarboxylase (127 aa).

Residue Ser-25 is the Schiff-base intermediate with substrate; via pyruvic acid of the active site. The residue at position 25 (Ser-25) is a Pyruvic acid (Ser). Thr-57 contacts substrate. Tyr-58 acts as the Proton donor in catalysis. Residue 73 to 75 (GAA) coordinates substrate.

Belongs to the PanD family. In terms of assembly, heterooctamer of four alpha and four beta subunits. Requires pyruvate as cofactor. In terms of processing, is synthesized initially as an inactive proenzyme, which is activated by self-cleavage at a specific serine bond to produce a beta-subunit with a hydroxyl group at its C-terminus and an alpha-subunit with a pyruvoyl group at its N-terminus.

Its subcellular location is the cytoplasm. It catalyses the reaction L-aspartate + H(+) = beta-alanine + CO2. It participates in cofactor biosynthesis; (R)-pantothenate biosynthesis; beta-alanine from L-aspartate: step 1/1. Functionally, catalyzes the pyruvoyl-dependent decarboxylation of aspartate to produce beta-alanine. The chain is Aspartate 1-decarboxylase from Clostridium botulinum (strain 657 / Type Ba4).